Reading from the N-terminus, the 195-residue chain is Ferredoxin-2, mitochondrial (195 aa).

A mitochondrion-targeting transit peptide spans 1-61 (MAAAAAVRAG…RRLRTSIGVC (61 aa)). A 2Fe-2S ferredoxin-type domain is found at 81 to 182 (NVVYIDRSGR…GMELTLPKVT (102 aa)). The [2Fe-2S] cluster site is built by Cys-117, Cys-123, Cys-126, and Cys-163.

The protein belongs to the adrenodoxin/putidaredoxin family. As to quaternary structure, component of the mitochondrial core iron-sulfur cluster (ISC) complex composed of NFS1, LYRM4, NDUFAB1, ISCU, FXN, and FDX2; this complex is a heterohexamer containing two copies of each monomer. Form a heterodimer complex with NFS1. [2Fe-2S] cluster serves as cofactor.

It is found in the mitochondrion. The protein resides in the mitochondrion matrix. In terms of biological role, electron donor, of the core iron-sulfur cluster (ISC) assembly complex, that acts to reduce the persulfide into sulfide during [2Fe-2S] clusters assembly on the scaffolding protein ISCU. The core iron-sulfur cluster (ISC) assembly complex is involved in the de novo synthesis of a [2Fe-2S] cluster, the first step of the mitochondrial iron-sulfur protein biogenesis. This process is initiated by the cysteine desulfurase complex (NFS1:LYRM4:NDUFAB1) that produces persulfide which is delivered on the scaffold protein ISCU in a FXN-dependent manner. Then this complex is stabilized by FDX2 which provides reducing equivalents to accomplish the [2Fe-2S] cluster assembly. Finally, the [2Fe-2S] cluster is transferred from ISCU to chaperone proteins, including HSCB, HSPA9 and GLRX5. Essential for coenzyme Q biosynthesis: together with FDXR, transfers the electrons required for the hydroxylation reaction performed by COQ6. The sequence is that of Ferredoxin-2, mitochondrial from Danio rerio (Zebrafish).